Reading from the N-terminus, the 574-residue chain is Zinc finger protein 394 (574 aa).

S12 carries the post-translational modification Phosphoserine. Residue K40 forms a Glycyl lysine isopeptide (Lys-Gly) (interchain with G-Cter in SUMO2) linkage. In terms of domain architecture, SCAN box spans 64–146 (RLHFRQLRYQ…AVVRALQRAL (83 aa)). Residues 155–230 (VTFEDMAVSL…LQEAFQGKHP (76 aa)) enclose the KRAB domain. The tract at residues 182–202 (ESAQKDSGSTVPPSLESRVEN) is disordered. Glycyl lysine isopeptide (Lys-Gly) (interchain with G-Cter in SUMO2) cross-links involve residues K203, K228, and K254. Residues 231 to 284 (LFSKCGSTHEDRVEKQSGNPLPLKLENSAEAEGLNSISDVNKNGSIEGEDSKNN) form a disordered region. Positions 265–274 (NSISDVNKNG) are enriched in polar residues. Residue K282 forms a Glycyl lysine isopeptide (Lys-Gly) (interchain with G-Cter in SUMO2) linkage. C2H2-type zinc fingers lie at residues 358 to 380 (YKCG…QRIH), 386 to 408 (YGCQ…QRTH), 414 to 436 (YTCL…QSTH), 442 to 463 (FKCE…QRLH), 469 to 491 (YKCE…HRIH), 497 to 519 (YGCS…QRIH), and 525 to 547 (YKCL…QRIH). A Glycyl lysine isopeptide (Lys-Gly) (interchain with G-Cter in SUMO2) cross-link involves residue K443.

This sequence belongs to the krueppel C2H2-type zinc-finger protein family.

The protein localises to the nucleus. Its function is as follows. May be involved in transcriptional regulation. This is Zinc finger protein 394 (ZNF394) from Pongo abelii (Sumatran orangutan).